We begin with the raw amino-acid sequence, 268 residues long: Tryptophan synthase alpha chain (268 aa).

Active-site proton acceptor residues include Glu49 and Asp60.

It belongs to the TrpA family. Tetramer of two alpha and two beta chains.

The enzyme catalyses (1S,2R)-1-C-(indol-3-yl)glycerol 3-phosphate + L-serine = D-glyceraldehyde 3-phosphate + L-tryptophan + H2O. It functions in the pathway amino-acid biosynthesis; L-tryptophan biosynthesis; L-tryptophan from chorismate: step 5/5. The alpha subunit is responsible for the aldol cleavage of indoleglycerol phosphate to indole and glyceraldehyde 3-phosphate. This Xanthomonas euvesicatoria pv. vesicatoria (strain 85-10) (Xanthomonas campestris pv. vesicatoria) protein is Tryptophan synthase alpha chain.